The primary structure comprises 208 residues: MIVIIDYDTGNTKSISKALDFIGLQNKISSNKTEILQADGVILPGVGAYPEAMQELIRRGLDVTLKEIAVLRKPILGVCLGMQLLLESSNEHVFTRGLGLIPGYAEKLPDEPKFVIPHMGWNQLENKRITPLTKKVDGEYVYYVHSYYANCPPEYIIATSGYSVEIPGMINNGHIYGAQFHPEKSGQIGLEILKGFKEVIRSCKSSLQ.

One can recognise a Glutamine amidotransferase type-1 domain in the interval 1-206; that stretch reads MIVIIDYDTG…KEVIRSCKSS (206 aa). Residue C79 is the Nucleophile of the active site. Active-site residues include H181 and E183.

As to quaternary structure, heterodimer of HisH and HisF.

The protein resides in the cytoplasm. The enzyme catalyses 5-[(5-phospho-1-deoxy-D-ribulos-1-ylimino)methylamino]-1-(5-phospho-beta-D-ribosyl)imidazole-4-carboxamide + L-glutamine = D-erythro-1-(imidazol-4-yl)glycerol 3-phosphate + 5-amino-1-(5-phospho-beta-D-ribosyl)imidazole-4-carboxamide + L-glutamate + H(+). The catalysed reaction is L-glutamine + H2O = L-glutamate + NH4(+). It participates in amino-acid biosynthesis; L-histidine biosynthesis; L-histidine from 5-phospho-alpha-D-ribose 1-diphosphate: step 5/9. Functionally, IGPS catalyzes the conversion of PRFAR and glutamine to IGP, AICAR and glutamate. The HisH subunit catalyzes the hydrolysis of glutamine to glutamate and ammonia as part of the synthesis of IGP and AICAR. The resulting ammonia molecule is channeled to the active site of HisF. In Listeria welshimeri serovar 6b (strain ATCC 35897 / DSM 20650 / CCUG 15529 / CIP 8149 / NCTC 11857 / SLCC 5334 / V8), this protein is Imidazole glycerol phosphate synthase subunit HisH.